The primary structure comprises 175 residues: MQHLKNIKSGNPKTKEQYQLTKNFDVIWLWSEDGKNWYEEVKNFQPDTIKIVYDENNIIVAITRDASTLNPEGFSVVEVPDITSNRRADDSGKWMFKDGAVVKRIYTADEQQQQAESQKAALLSEAENVIQPLERAVRLNMATDEERARLESWERYSVLVSRVDPANPEWPEMPQ.

This sequence belongs to the tfa family.

Functionally, acts catalytically in the formation of tail protein dimers. In Escherichia phage P2 (Bacteriophage P2), this protein is Probable tail fiber assembly protein (G).